Reading from the N-terminus, the 330-residue chain is Aspartate--ammonia ligase (330 aa).

The protein belongs to the class-II aminoacyl-tRNA synthetase family. AsnA subfamily.

It is found in the cytoplasm. The enzyme catalyses L-aspartate + NH4(+) + ATP = L-asparagine + AMP + diphosphate + H(+). It functions in the pathway amino-acid biosynthesis; L-asparagine biosynthesis; L-asparagine from L-aspartate (ammonia route): step 1/1. This Streptococcus equi subsp. zooepidemicus (strain H70) protein is Aspartate--ammonia ligase.